A 565-amino-acid chain; its full sequence is Adenine deaminase 1 (565 aa).

The protein belongs to the metallo-dependent hydrolases superfamily. Adenine deaminase family. Mn(2+) is required as a cofactor.

The enzyme catalyses adenine + H2O + H(+) = hypoxanthine + NH4(+). This chain is Adenine deaminase 1, found in Rhizobium meliloti (strain 1021) (Ensifer meliloti).